The primary structure comprises 518 residues: 2-isopropylmalate synthase (518 aa).

One can recognise a Pyruvate carboxyltransferase domain in the interval 5-269 (IIVLDTTLRD…STNVRLKELI (265 aa)). Residues aspartate 14, histidine 204, histidine 206, and asparagine 240 each contribute to the Mn(2+) site. The regulatory domain stretch occupies residues 397-518 (ELDSFQVVTN…HDSQAPVSAR (122 aa)).

It belongs to the alpha-IPM synthase/homocitrate synthase family. LeuA type 1 subfamily. Homodimer. The cofactor is Mn(2+).

It is found in the cytoplasm. It catalyses the reaction 3-methyl-2-oxobutanoate + acetyl-CoA + H2O = (2S)-2-isopropylmalate + CoA + H(+). The protein operates within amino-acid biosynthesis; L-leucine biosynthesis; L-leucine from 3-methyl-2-oxobutanoate: step 1/4. Its function is as follows. Catalyzes the condensation of the acetyl group of acetyl-CoA with 3-methyl-2-oxobutanoate (2-ketoisovalerate) to form 3-carboxy-3-hydroxy-4-methylpentanoate (2-isopropylmalate). The polypeptide is 2-isopropylmalate synthase (Geobacillus sp. (strain Y412MC10)).